The sequence spans 104 residues: Colipase-like protein 2 (104 aa).

A signal peptide spans 1 to 19; it reads MAFTQALVTVLAFLVGTLP. Cystine bridges form between Cys-38–Cys-49, Cys-44–Cys-60, Cys-48–Cys-82, Cys-70–Cys-90, and Cys-84–Cys-101.

Belongs to the colipase family.

It localises to the secreted. In Rattus norvegicus (Rat), this protein is Colipase-like protein 2 (Clpsl2).